We begin with the raw amino-acid sequence, 183 residues long: MMLQPPKVLLLYAHPESQDSVANRVLLQPVQQLEHVTVHDLYAHYPDFFIDIHHEQQLLRDHQVIVFQHPLYTYSCPALLKEWLDRVLARGFANGVGGHALTGKHWRSVITTGEQEGTYRIGGYNRYPMEDILRPFELTAAMCHMHWINPMIIYWARRQKPETLASHAQAYVQWLQSPLTRGL.

The protein belongs to the NAD(P)H dehydrogenase (quinone) family. KefG subfamily. As to quaternary structure, interacts with KefB.

Its subcellular location is the cell inner membrane. The enzyme catalyses a quinone + NADH + H(+) = a quinol + NAD(+). It catalyses the reaction a quinone + NADPH + H(+) = a quinol + NADP(+). Its function is as follows. Regulatory subunit of a potassium efflux system that confers protection against electrophiles. Required for full activity of KefB. The chain is Glutathione-regulated potassium-efflux system ancillary protein KefG from Yersinia pestis bv. Antiqua (strain Angola).